Consider the following 435-residue polypeptide: Glutamyl-tRNA reductase (435 aa).

Substrate contacts are provided by residues 50–53, S110, 115–117, and Q121; these read TCNR and ESQ. C51 serves as the catalytic Nucleophile. NADP(+) is bound at residue 191-196; the sequence is GAGDMG.

It belongs to the glutamyl-tRNA reductase family. Homodimer.

It catalyses the reaction (S)-4-amino-5-oxopentanoate + tRNA(Glu) + NADP(+) = L-glutamyl-tRNA(Glu) + NADPH + H(+). It participates in porphyrin-containing compound metabolism; protoporphyrin-IX biosynthesis; 5-aminolevulinate from L-glutamyl-tRNA(Glu): step 1/2. Its function is as follows. Catalyzes the NADPH-dependent reduction of glutamyl-tRNA(Glu) to glutamate 1-semialdehyde (GSA). This is Glutamyl-tRNA reductase from Sulfurovum sp. (strain NBC37-1).